The following is a 390-amino-acid chain: Uroporphyrinogen decarboxylase 2, chloroplastic (390 aa).

The transit peptide at 1–30 (MATACPPLSLQPAYLSGRSARARRPPPAVR) directs the protein to the chloroplast. Substrate contacts are provided by residues 70-74 (RQAGR), Phe-89, Ser-119, Asp-120, Tyr-197, Ser-252, and His-367.

This sequence belongs to the uroporphyrinogen decarboxylase family. Homodimer.

It is found in the plastid. The protein localises to the chloroplast. It carries out the reaction uroporphyrinogen III + 4 H(+) = coproporphyrinogen III + 4 CO2. The protein operates within porphyrin-containing compound metabolism; protoporphyrin-IX biosynthesis; coproporphyrinogen-III from 5-aminolevulinate: step 4/4. Its function is as follows. Catalyzes the decarboxylation of four acetate groups of uroporphyrinogen-III to yield coproporphyrinogen-III. The polypeptide is Uroporphyrinogen decarboxylase 2, chloroplastic (Oryza sativa subsp. japonica (Rice)).